Consider the following 461-residue polypeptide: Photosystem II CP43 reaction center protein (461 aa).

Positions Met-1–Glu-2 are excised as a propeptide. Thr-3 is subject to N-acetylthreonine. Thr-3 carries the post-translational modification Phosphothreonine. A run of 5 helical transmembrane segments spans residues Leu-57–Ala-81, Leu-122–Lys-143, Lys-166–Thr-188, Arg-243–Ser-263, and Trp-279–Ala-300. Glu-355 contributes to the [CaMn4O5] cluster binding site. A helical transmembrane segment spans residues Arg-435–Pro-459.

This sequence belongs to the PsbB/PsbC family. PsbC subfamily. As to quaternary structure, PSII is composed of 1 copy each of membrane proteins PsbA, PsbB, PsbC, PsbD, PsbE, PsbF, PsbH, PsbI, PsbJ, PsbK, PsbL, PsbM, PsbT, PsbY, PsbZ, Psb30/Ycf12, at least 3 peripheral proteins of the oxygen-evolving complex and a large number of cofactors. It forms dimeric complexes. Requires Binds multiple chlorophylls and provides some of the ligands for the Ca-4Mn-5O cluster of the oxygen-evolving complex. It may also provide a ligand for a Cl- that is required for oxygen evolution. PSII binds additional chlorophylls, carotenoids and specific lipids. as cofactor.

The protein localises to the plastid. It localises to the chloroplast thylakoid membrane. In terms of biological role, one of the components of the core complex of photosystem II (PSII). It binds chlorophyll and helps catalyze the primary light-induced photochemical processes of PSII. PSII is a light-driven water:plastoquinone oxidoreductase, using light energy to abstract electrons from H(2)O, generating O(2) and a proton gradient subsequently used for ATP formation. The sequence is that of Photosystem II CP43 reaction center protein from Euglena gracilis.